Here is a 445-residue protein sequence, read N- to C-terminus: MQFDESDARVWIWFEIRREDDIVELLWQSGQVVGTNQTHRQSYDPPPILRGSGSGRGEENAPLSQPPPHLHQQNLFIQEGEMYSWLHHSYRQNYFCSELLNSTPATHPQSSISLAPRQTIATRRAENFMNFSWLRGNIFTGGRVDEAGPSFSVVRESMQVGSNTTPPSSSATESCVIPATEGTASRVSGTLAAHDLGRKGKAVAVEAAGTPSSGVCKAETEPVQIQPATESKLKAREETHGTEEARGSTSRKRSRTAEMHNLAERRRREKINEKMKTLQQLIPRCNKSTKVSTLDDAIEYVKSLQSQIQGMMSPMMNAGNTQQFMPHMAMDMNRPPPFIPFPGTSFPMPAQMAGVGPSYPAPRYPFPNIQTFDPSRVRLPSPQPNPVSNQPQFPAYMNPYSQFAGPHQLQQPPPPPFQGQTTSQLSSGQASSSKEPEDQENQPTA.

Disordered regions lie at residues 36 to 70 (NQTHRQSYDPPPILRGSGSGRGEENAPLSQPPPHL), 224 to 260 (QIQPATESKLKAREETHGTEEARGSTSRKRSRTAEMH), and 365 to 445 (PFPN…QPTA). Basic and acidic residues predominate over residues 231-246 (SKLKAREETHGTEEAR). The bHLH domain maps to 255 to 304 (RTAEMHNLAERRRREKINEKMKTLQQLIPRCNKSTKVSTLDDAIEYVKSL). Low complexity predominate over residues 418-433 (QGQTTSQLSSGQASSS).

Homodimer.

It localises to the nucleus. The sequence is that of Putative transcription factor bHLH056 (BHLH56) from Arabidopsis thaliana (Mouse-ear cress).